The chain runs to 228 residues: Putative N-acetylmannosamine-6-phosphate 2-epimerase (228 aa).

This sequence belongs to the NanE family.

It catalyses the reaction an N-acyl-D-glucosamine 6-phosphate = an N-acyl-D-mannosamine 6-phosphate. The protein operates within amino-sugar metabolism; N-acetylneuraminate degradation; D-fructose 6-phosphate from N-acetylneuraminate: step 3/5. Its function is as follows. Converts N-acetylmannosamine-6-phosphate (ManNAc-6-P) to N-acetylglucosamine-6-phosphate (GlcNAc-6-P). This is Putative N-acetylmannosamine-6-phosphate 2-epimerase from Lactiplantibacillus plantarum (strain ATCC BAA-793 / NCIMB 8826 / WCFS1) (Lactobacillus plantarum).